A 131-amino-acid chain; its full sequence is Small ribosomal subunit protein uS11 (131 aa).

Belongs to the universal ribosomal protein uS11 family. In terms of assembly, part of the 30S ribosomal subunit. Interacts with proteins S7 and S18. Binds to IF-3.

In terms of biological role, located on the platform of the 30S subunit, it bridges several disparate RNA helices of the 16S rRNA. Forms part of the Shine-Dalgarno cleft in the 70S ribosome. This is Small ribosomal subunit protein uS11 from Endomicrobium trichonymphae.